We begin with the raw amino-acid sequence, 381 residues long: Queuine tRNA-ribosyltransferase (381 aa).

Asp96 functions as the Proton acceptor in the catalytic mechanism. Residues 96-100 (DSGGF), Asp150, Gln193, and Gly220 each bind substrate. Positions 251 to 257 (GVGSPDA) are RNA binding. The active-site Nucleophile is the Asp270. An RNA binding; important for wobble base 34 recognition region spans residues 275–279 (TRIAR). Zn(2+)-binding residues include Cys308, Cys310, Cys313, and His339.

The protein belongs to the queuine tRNA-ribosyltransferase family. In terms of assembly, homodimer. Within each dimer, one monomer is responsible for RNA recognition and catalysis, while the other monomer binds to the replacement base PreQ1. The cofactor is Zn(2+).

It carries out the reaction 7-aminomethyl-7-carbaguanine + guanosine(34) in tRNA = 7-aminomethyl-7-carbaguanosine(34) in tRNA + guanine. Its pathway is tRNA modification; tRNA-queuosine biosynthesis. Catalyzes the base-exchange of a guanine (G) residue with the queuine precursor 7-aminomethyl-7-deazaguanine (PreQ1) at position 34 (anticodon wobble position) in tRNAs with GU(N) anticodons (tRNA-Asp, -Asn, -His and -Tyr). Catalysis occurs through a double-displacement mechanism. The nucleophile active site attacks the C1' of nucleotide 34 to detach the guanine base from the RNA, forming a covalent enzyme-RNA intermediate. The proton acceptor active site deprotonates the incoming PreQ1, allowing a nucleophilic attack on the C1' of the ribose to form the product. After dissociation, two additional enzymatic reactions on the tRNA convert PreQ1 to queuine (Q), resulting in the hypermodified nucleoside queuosine (7-(((4,5-cis-dihydroxy-2-cyclopenten-1-yl)amino)methyl)-7-deazaguanosine). In Bacillus subtilis (strain 168), this protein is Queuine tRNA-ribosyltransferase.